Reading from the N-terminus, the 454-residue chain is Cathepsin C (454 aa).

A signal peptide spans 1 to 20 (MHWVFHCILIILACLRFTCA). Positions 21–217 (DTPANCTYED…SKELISLTGN (197 aa)) are excised as a propeptide. N25 is a glycosylation site (N-linked (GlcNAc...) asparagine). 3 cysteine pairs are disulfide-bonded: C26–C107, C244–C287, and C280–C321. Residue C247 is part of the active site. A glycan (N-linked (GlcNAc...) asparagine) is linked at N265. F291 contacts chloride. N326 carries N-linked (GlcNAc...) asparagine glycosylation. A chloride-binding site is contributed by Y337. Active-site residues include H398 and N420.

It belongs to the peptidase C1 family. The cofactor is chloride.

Its subcellular location is the lysosome. Its function is as follows. Thiol protease. Has a role as a digestive enzyme. This is Cathepsin C from Schistosoma mansoni (Blood fluke).